We begin with the raw amino-acid sequence, 176 residues long: Peptidyl-tRNA hydrolase (176 aa).

Tyr-14 provides a ligand contact to tRNA. His-19 (proton acceptor) is an active-site residue. Positions 65, 67, and 113 each coordinate tRNA.

It belongs to the PTH family. In terms of assembly, monomer.

The protein localises to the cytoplasm. The catalysed reaction is an N-acyl-L-alpha-aminoacyl-tRNA + H2O = an N-acyl-L-amino acid + a tRNA + H(+). In terms of biological role, hydrolyzes ribosome-free peptidyl-tRNAs (with 1 or more amino acids incorporated), which drop off the ribosome during protein synthesis, or as a result of ribosome stalling. Its function is as follows. Catalyzes the release of premature peptidyl moieties from peptidyl-tRNA molecules trapped in stalled 50S ribosomal subunits, and thus maintains levels of free tRNAs and 50S ribosomes. In Phytoplasma mali (strain AT), this protein is Peptidyl-tRNA hydrolase.